Consider the following 84-residue polypeptide: uncharacterized protein (84 aa).

The segment at 8-47 (CECCDRDLPPDSGDAMICTFECTFCAGCAETKLGGTCPNC) is cysteine motif.

This is an uncharacterized protein from Rhizobium meliloti (strain 1021) (Ensifer meliloti).